The following is a 500-amino-acid chain: Mannan polymerase II complex ANP1 subunit (500 aa).

The Cytoplasmic portion of the chain corresponds to 1–15 (MKYNNRKLSFNPTTV). The chain crosses the membrane as a helical; Signal-anchor for type II membrane protein span at residues 16–27 (SIAGTLLTVFFL). Residues 28-500 (TRLVLSFFSI…VPLDFDPDRN (473 aa)) lie on the Lumenal side of the membrane. A disordered region spans residues 424–500 (WSEEGDGSEL…VPLDFDPDRN (77 aa)). A compositionally biased stretch (low complexity) spans 446–467 (QQQQQQQQQQQQQQQQQQQQQQ). The segment covering 489–500 (KEVPLDFDPDRN) has biased composition (basic and acidic residues).

Belongs to the ANP1/MMN9/VAN1 family. In terms of assembly, component of the M-Pol II complex composed of ANP1, MNN9, MNN10, MNN11 and HOC1.

The protein localises to the endoplasmic reticulum membrane. Its subcellular location is the golgi apparatus membrane. Its function is as follows. Involved in the organization of the secretory pathway. Required to maintain a functional Golgi apparatus. The M-Pol II complex possesses alpha-1,6-mannosyltransferase activity and is probably involved in the elongation of the mannan backbone of N-linked glycans on cell wall and periplasmic proteins. This chain is Mannan polymerase II complex ANP1 subunit (ANP1), found in Saccharomyces cerevisiae (strain ATCC 204508 / S288c) (Baker's yeast).